The chain runs to 466 residues: Soluble pyridine nucleotide transhydrogenase (466 aa).

36–45 (ERYQNVGGGC) is a binding site for FAD.

The protein belongs to the class-I pyridine nucleotide-disulfide oxidoreductase family. It depends on FAD as a cofactor.

The protein resides in the cytoplasm. It catalyses the reaction NAD(+) + NADPH = NADH + NADP(+). Conversion of NADPH, generated by peripheral catabolic pathways, to NADH, which can enter the respiratory chain for energy generation. The protein is Soluble pyridine nucleotide transhydrogenase of Escherichia coli O81 (strain ED1a).